The primary structure comprises 342 residues: Dihydroorotase (342 aa).

2 residues coordinate Zn(2+): His13 and His15. Substrate contacts are provided by residues 15 to 17 (HLR) and Asn41. The Zn(2+) site is built by Lys98, His135, and His173. Position 98 is an N6-carboxylysine (Lys98). His135 contacts substrate. Leu218 serves as a coordination point for substrate. Residue Asp246 coordinates Zn(2+). Asp246 is an active-site residue. Residues His250 and Ala262 each coordinate substrate.

This sequence belongs to the metallo-dependent hydrolases superfamily. DHOase family. Class II DHOase subfamily. Homodimer. The cofactor is Zn(2+).

The enzyme catalyses (S)-dihydroorotate + H2O = N-carbamoyl-L-aspartate + H(+). It participates in pyrimidine metabolism; UMP biosynthesis via de novo pathway; (S)-dihydroorotate from bicarbonate: step 3/3. Its function is as follows. Catalyzes the reversible cyclization of carbamoyl aspartate to dihydroorotate. The sequence is that of Dihydroorotase from Aliivibrio fischeri (strain ATCC 700601 / ES114) (Vibrio fischeri).